Consider the following 550-residue polypeptide: Methionine--tRNA ligase (550 aa).

The short motif at Leu10–Asn22 is the 'HIGH' region element. Residues Lys336–Ser340 carry the 'KMSKS' region motif. Lys339 provides a ligand contact to ATP.

The protein belongs to the class-I aminoacyl-tRNA synthetase family.

The catalysed reaction is tRNA(Met) + L-methionine + ATP = L-methionyl-tRNA(Met) + AMP + diphosphate. This Acanthamoeba polyphaga mimivirus (APMV) protein is Methionine--tRNA ligase (MARS).